Consider the following 88-residue polypeptide: Protein K3 (88 aa).

Positions 8-82 (LPNAGDVIKG…TKGYIDVNYK (75 aa)) constitute an S1 motif domain. Binding to host EIF2AK2/PKR stretches follow at residues 43–53 (SVKMHMDRYVE) and 74–79 (KGYIDV).

It belongs to the poxviridae K3 protein family. Interacts with host EIF2AK2/PKR kinase.

Functionally, viral mimic of EIF2S1/eIF-2alpha that acts as a pseudosubstrate for EIF2AK2/PKR kinase. Inhibits therefore EIF2S1/eIF-2alpha phosphorylation by host EIF2AK2/PKR kinase and prevents protein synthesis shutoff. Determinant of host species specificity. The polypeptide is Protein K3 (Vaccinia virus (strain Western Reserve) (VACV)).